Consider the following 664-residue polypeptide: Bifunctional polymyxin resistance protein ArnA (664 aa).

Residues Met1–Met308 form a formyltransferase ArnAFT region. The Proton donor; for formyltransferase activity role is filled by His106. Residues Arg116 and Val138–Asp142 each bind (6R)-10-formyltetrahydrofolate. The interval Arg318 to Cys664 is dehydrogenase ArnADH. NAD(+) is bound by residues Asp351 and Asp372–Ile373. UDP-alpha-D-glucuronate is bound by residues Ala397, Tyr402, and Thr436–Ser437. The active-site Proton acceptor; for decarboxylase activity is Glu438. Residues Arg464, Asn495, Arg529–Arg538, and Tyr616 each bind UDP-alpha-D-glucuronate. The Proton donor; for decarboxylase activity role is filled by Arg622.

In the N-terminal section; belongs to the Fmt family. UDP-L-Ara4N formyltransferase subfamily. It in the C-terminal section; belongs to the NAD(P)-dependent epimerase/dehydratase family. UDP-glucuronic acid decarboxylase subfamily. As to quaternary structure, homohexamer, formed by a dimer of trimers.

The catalysed reaction is UDP-alpha-D-glucuronate + NAD(+) = UDP-beta-L-threo-pentopyranos-4-ulose + CO2 + NADH. It carries out the reaction UDP-4-amino-4-deoxy-beta-L-arabinose + (6R)-10-formyltetrahydrofolate = UDP-4-deoxy-4-formamido-beta-L-arabinose + (6S)-5,6,7,8-tetrahydrofolate + H(+). It participates in nucleotide-sugar biosynthesis; UDP-4-deoxy-4-formamido-beta-L-arabinose biosynthesis; UDP-4-deoxy-4-formamido-beta-L-arabinose from UDP-alpha-D-glucuronate: step 1/3. Its pathway is nucleotide-sugar biosynthesis; UDP-4-deoxy-4-formamido-beta-L-arabinose biosynthesis; UDP-4-deoxy-4-formamido-beta-L-arabinose from UDP-alpha-D-glucuronate: step 3/3. It functions in the pathway bacterial outer membrane biogenesis; lipopolysaccharide biosynthesis. Its function is as follows. Bifunctional enzyme that catalyzes the oxidative decarboxylation of UDP-glucuronic acid (UDP-GlcUA) to UDP-4-keto-arabinose (UDP-Ara4O) and the addition of a formyl group to UDP-4-amino-4-deoxy-L-arabinose (UDP-L-Ara4N) to form UDP-L-4-formamido-arabinose (UDP-L-Ara4FN). The modified arabinose is attached to lipid A and is required for resistance to polymyxin and cationic antimicrobial peptides. This Pseudomonas syringae pv. syringae (strain B728a) protein is Bifunctional polymyxin resistance protein ArnA.